Reading from the N-terminus, the 486-residue chain is Histamine H1 receptor (486 aa).

Residues 1-29 lie on the Extracellular side of the membrane; the sequence is MSFANTSSTFEDKMCEGNRTAMASPQLLP. 2 N-linked (GlcNAc...) asparagine glycosylation sites follow: Asn-5 and Asn-18. Residues 30 to 50 form a helical membrane-spanning segment; that stretch reads LVVVLSSISLVTVGLNLLVLY. Over 51-64 the chain is Cytoplasmic; the sequence is AVHSERKLHTVGNL. A helical membrane pass occupies residues 65-89; sequence YIVSLSVADLIVGAVVMPMNILYLI. The Extracellular segment spans residues 90-97; sequence MTKWSLGR. The helical transmembrane segment at 98–123 threads the bilayer; that stretch reads PLCLFWLSMDYVASTASIFSVFILCI. The cysteines at positions 100 and 180 are disulfide-linked. The histamine site is built by Asp-107 and Thr-112. Residues 107-112 are important for agonist binding; it reads DYVAST. Topologically, residues 124-144 are cytoplasmic; the sequence is DRYRSVQQPLRYLRYRTKTRA. Residues Thr-140 and Thr-142 each carry the phosphothreonine modification. A helical transmembrane segment spans residues 145 to 164; sequence SATILGAWFFSFLWVIPILG. Topologically, residues 165-188 are extracellular; the sequence is WHHFMPPAPELREDKCETDFYNVT. A helical transmembrane segment spans residues 189 to 211; sequence WFKIMTAIINFYLPTLLMLWFYV. Asn-198 contributes to the histamine binding site. Residues 212–415 are Cytoplasmic-facing; it reads KIYKAVRRHC…LNRERKAAKQ (204 aa). Residue Ser-230 is modified to Phosphoserine. Over residues 241–253 the composition is skewed to basic and acidic residues; the sequence is SDDTKEGAKKPGR. Disordered stretches follow at residues 241–295 and 310–379; these read SDDT…GERE and VAEG…RSGS. 2 positions are modified to phosphoserine: Ser-342 and Ser-345. Residues 347–365 show a composition bias toward polar residues; that stretch reads DQTLVDQQSFSRTTDSDTS. Phosphoserine is present on residues Ser-379, Ser-381, Ser-395, and Ser-397. Residues 416-439 form a helical membrane-spanning segment; sequence LGFIMAAFILCWIPYFIFFMVIAF. Residues 423 to 427 form an important for agonist binding region; sequence FILCW. Tyr-430 contacts histamine. Cys-440 and Cys-443 are oxidised to a cystine. Residues 440–445 are Extracellular-facing; the sequence is CKSCCS. A helical membrane pass occupies residues 446-468; it reads EPMHMFTIWLGYINSTLNPLIYP. The Cytoplasmic portion of the chain corresponds to 469–486; the sequence is LCNENFKKTFKKILHIRS.

This sequence belongs to the G-protein coupled receptor 1 family. Post-translationally, phosphorylation at sites in the second and third cytoplasmic loops independently contribute to agonist-induced receptor down-regulation.

The protein resides in the cell membrane. In terms of biological role, G-protein-coupled receptor for histamine, a biogenic amine that functions as an immune modulator and a neurotransmitter. Through the H1 receptor, histamine mediates the contraction of smooth muscles and increases capillary permeability due to contraction of terminal venules. Also mediates neurotransmission in the central nervous system and thereby regulates circadian rhythms, emotional and locomotor activities as well as cognitive functions. This chain is Histamine H1 receptor, found in Rattus norvegicus (Rat).